The primary structure comprises 377 residues: Chaperone protein DnaJ (377 aa).

A J domain is found at 5–70 (DYYEILGVAK…QKRAAYDQFG (66 aa)). The segment at 130 to 208 (GTEVKIRVPS…CHGQGRVEEH (79 aa)) adopts a CR-type zinc-finger fold. Positions 143, 146, 160, 163, 182, 185, 196, and 199 each coordinate Zn(2+). CXXCXGXG motif repeat units follow at residues 143–150 (CGECHGSG), 160–167 (CGTCGGVG), 182–189 (CPRCHGTG), and 196–203 (CKACHGQG).

This sequence belongs to the DnaJ family. Homodimer. Zn(2+) serves as cofactor.

The protein resides in the cytoplasm. Its function is as follows. Participates actively in the response to hyperosmotic and heat shock by preventing the aggregation of stress-denatured proteins and by disaggregating proteins, also in an autonomous, DnaK-independent fashion. Unfolded proteins bind initially to DnaJ; upon interaction with the DnaJ-bound protein, DnaK hydrolyzes its bound ATP, resulting in the formation of a stable complex. GrpE releases ADP from DnaK; ATP binding to DnaK triggers the release of the substrate protein, thus completing the reaction cycle. Several rounds of ATP-dependent interactions between DnaJ, DnaK and GrpE are required for fully efficient folding. Also involved, together with DnaK and GrpE, in the DNA replication of plasmids through activation of initiation proteins. In Thioalkalivibrio sulfidiphilus (strain HL-EbGR7), this protein is Chaperone protein DnaJ.